A 189-amino-acid chain; its full sequence is MSSAQAEDEQDYETPSCYELQKHFTHGGVAYTHVNEVWPGVYIGNEETARDRYKLQTLGITHILNAAEGEWNSVDTGAEYYKDMQIHYYGVTAEDTPTFNISQYFYSAAEYIQQTLSDPHNKLLLHCVMGRSRSATLFLAFLMLQQRMSLLQAVEQLAHRRHICPNWGFLKQLRELDTHLQEERRRTHT.

In terms of domain architecture, Tyrosine-protein phosphatase spans 33-182 (HVNEVWPGVY…LRELDTHLQE (150 aa)). 126–133 (HCVMGRSR) contributes to the substrate binding site. C127 acts as the Phosphocysteine intermediate in catalysis.

This sequence belongs to the protein-tyrosine phosphatase family. Non-receptor class dual specificity subfamily.

The protein localises to the cytoplasm. It localises to the nucleus. The enzyme catalyses O-phospho-L-tyrosyl-[protein] + H2O = L-tyrosyl-[protein] + phosphate. The catalysed reaction is O-phospho-L-seryl-[protein] + H2O = L-seryl-[protein] + phosphate. It carries out the reaction O-phospho-L-threonyl-[protein] + H2O = L-threonyl-[protein] + phosphate. Functionally, dual specificity phosphatase able to dephosphorylate phosphotyrosine, phosphoserine and phosphothreonine residues within the same substrate, with a preference for phosphotyrosine as a substrate. Involved in the modulation of AMPK and MAPK1/2 signaling pathways. In Danio rerio (Zebrafish), this protein is Dual specificity phosphatase 29 (dusp29).